Reading from the N-terminus, the 271-residue chain is Putative pyruvate, phosphate dikinase regulatory protein (271 aa).

An ADP-binding site is contributed by 147-154 (GLSRTSKT).

Belongs to the pyruvate, phosphate/water dikinase regulatory protein family. PDRP subfamily.

The enzyme catalyses N(tele)-phospho-L-histidyl/L-threonyl-[pyruvate, phosphate dikinase] + ADP = N(tele)-phospho-L-histidyl/O-phospho-L-threonyl-[pyruvate, phosphate dikinase] + AMP + H(+). It catalyses the reaction N(tele)-phospho-L-histidyl/O-phospho-L-threonyl-[pyruvate, phosphate dikinase] + phosphate + H(+) = N(tele)-phospho-L-histidyl/L-threonyl-[pyruvate, phosphate dikinase] + diphosphate. In terms of biological role, bifunctional serine/threonine kinase and phosphorylase involved in the regulation of the pyruvate, phosphate dikinase (PPDK) by catalyzing its phosphorylation/dephosphorylation. In Clostridium tetani (strain Massachusetts / E88), this protein is Putative pyruvate, phosphate dikinase regulatory protein.